Here is a 1248-residue protein sequence, read N- to C-terminus: Bifunctional autolysin (1248 aa).

The first 29 residues, 1 to 29 (MAKKFNYKLPSMVALTLVGSAVTAHQVQA), serve as a signal peptide directing secretion. The disordered stretch occupies residues 103-134 (GDTRANQSATTNNTQPVAKSTSTTAPKTNTNV). Residues 191–767 (ASAQPRSVAA…AVAQPKTAVK (577 aa)) form an N-acetylmuramoyl-L-alanine amidase region. GW domains are found at residues 435-509 (TVAA…YNTA), 511-585 (SPVN…DTAK), 604-678 (TVSS…YNNA), 680-754 (SPVN…VPAA), 776-851 (TTQT…VQNL), 853-928 (KEVK…APTA), and 935-1009 (AAKD…KELI). The segment at 768–1248 (AYTVTKPQTT…GKYFDIPQYK (481 aa)) is endo-beta-N-acetylglucosaminidase.

It in the N-terminal section; belongs to the N-acetylmuramoyl-L-alanine amidase 2 family. This sequence in the C-terminal section; belongs to the glycosyl hydrolase 73 family. Oligomer; forms a ring structure at the cell surface which is important for efficient partitioning of daughter cells after cell division. In terms of processing, undergoes proteolytic processing to generate the two extracellular lytic enzymes, probably at the septal region on the cell surface.

The protein resides in the secreted. It carries out the reaction Hydrolyzes the link between N-acetylmuramoyl residues and L-amino acid residues in certain cell-wall glycopeptides.. The enzyme catalyses an N(4)-(oligosaccharide-(1-&gt;3)-[oligosaccharide-(1-&gt;6)]-beta-D-Man-(1-&gt;4)-beta-D-GlcNAc-(1-&gt;4)-alpha-D-GlcNAc)-L-asparaginyl-[protein] + H2O = an oligosaccharide-(1-&gt;3)-[oligosaccharide-(1-&gt;6)]-beta-D-Man-(1-&gt;4)-D-GlcNAc + N(4)-(N-acetyl-beta-D-glucosaminyl)-L-asparaginyl-[protein]. In terms of biological role, endohydrolysis of the di-N-acetylchitobiosyl unit in high-mannose glycopeptides and glycoproteins containing the -[(Man)5(GlcNAc)2]-Asn structure. One N-acetyl-D-glucosamine residue remains attached to the protein; the rest of the oligosaccharide is released intact. Cleaves the peptidoglycan connecting the daughter cells at the end of the cell division cycle, resulting in the separation of the two newly divided cells. Acts as an autolysin in penicillin-induced lysis. The sequence is that of Bifunctional autolysin (atl) from Staphylococcus aureus (strain Mu50 / ATCC 700699).